Consider the following 311-residue polypeptide: MSNATLLTAFILTGLPHAPGLDAPLFGIFLVVYVLTVLGNLLILLVIRVDSHLHTPMYYFLTNLSFIDMWFSTVTVPKMLMTLVSPSGRTISFHSCVAQLYFFHFLGSTECFLYTVMSYDRYLAISYPLRYTNMMTGRSCALLATGTWLSGSLHSAVQTILTFHLPYCGPNQIQHYFCDAPPILKLACADTSANEMVIFVNIGLVASGCFVLIVLSYVSIVCSILRIRTSEGRHRAFQTCASHCIVVLCFFGPGLFIYLRPGSRDALHGVVAVFYTTLTPLFNPVVYTLRNKEVKKALLKLKNGSVFAQGE.

The Extracellular portion of the chain corresponds to M1–A23. N3 carries N-linked (GlcNAc...) asparagine glycosylation. Residues P24–L44 traverse the membrane as a helical segment. At L45–H52 the chain is on the cytoplasmic side. The chain crosses the membrane as a helical span at residues L53–T73. At V74–A98 the chain is on the extracellular side. C96 and C188 are oxidised to a cystine. Residues Q99 to Y119 form a helical membrane-spanning segment. Topologically, residues D120 to R138 are cytoplasmic. Residues S139–T159 form a helical membrane-spanning segment. The Extracellular segment spans residues I160–M196. Residues V197 to S216 form a helical membrane-spanning segment. The Cytoplasmic segment spans residues Y217 to A236. Residues F237 to I257 traverse the membrane as a helical segment. Over Y258–H268 the chain is Extracellular. The helical transmembrane segment at G269–L289 threads the bilayer. The Cytoplasmic portion of the chain corresponds to R290–E311.

It belongs to the G-protein coupled receptor 1 family.

Its subcellular location is the cell membrane. Functionally, odorant receptor. This is Olfactory receptor 10G7 (OR10G7) from Homo sapiens (Human).